The primary structure comprises 320 residues: Ferrochelatase (320 aa).

Positions 194 and 275 each coordinate Fe cation.

Belongs to the ferrochelatase family. In terms of assembly, monomer.

The protein resides in the cytoplasm. The enzyme catalyses heme b + 2 H(+) = protoporphyrin IX + Fe(2+). Its pathway is porphyrin-containing compound metabolism; protoheme biosynthesis; protoheme from protoporphyrin-IX: step 1/1. Its function is as follows. Catalyzes the ferrous insertion into protoporphyrin IX. In Shigella boydii serotype 4 (strain Sb227), this protein is Ferrochelatase.